A 147-amino-acid chain; its full sequence is Large ribosomal subunit protein uL11 (147 aa).

Belongs to the universal ribosomal protein uL11 family. Part of the ribosomal stalk of the 50S ribosomal subunit. Interacts with L10 and the large rRNA to form the base of the stalk. L10 forms an elongated spine to which L12 dimers bind in a sequential fashion forming a multimeric L10(L12)X complex. In terms of processing, one or more lysine residues are methylated.

In terms of biological role, forms part of the ribosomal stalk which helps the ribosome interact with GTP-bound translation factors. This chain is Large ribosomal subunit protein uL11, found in Parabacteroides distasonis (strain ATCC 8503 / DSM 20701 / CIP 104284 / JCM 5825 / NCTC 11152).